Here is a 500-residue protein sequence, read N- to C-terminus: Probable 26S proteasome non-ATPase regulatory subunit 3 (500 aa).

Residues 253–432 enclose the PCI domain; the sequence is ARFLYYLGRI…GYMRTKESTD (180 aa). The tract at residues 462 to 484 is disordered; the sequence is RYPPKSYGKELESAEERREREQQ. The span at 468–484 shows a compositional bias: basic and acidic residues; sequence YGKELESAEERREREQQ.

This sequence belongs to the proteasome subunit S3 family. As to quaternary structure, the 26S proteasome is composed of a core protease, known as the 20S proteasome, capped at one or both ends by the 19S regulatory complex (RC). The RC is composed of at least 18 different subunits in two subcomplexes, the base and the lid, which form the portions proximal and distal to the 20S proteolytic core, respectively.

Functionally, acts as a regulatory subunit of the 26 proteasome which is involved in the ATP-dependent degradation of ubiquitinated proteins. This is Probable 26S proteasome non-ATPase regulatory subunit 3 (DOXA2) from Anopheles stephensi (Indo-Pakistan malaria mosquito).